Here is a 438-residue protein sequence, read N- to C-terminus: Putative F-box protein At5g15660 (438 aa).

A disordered region spans residues Met-1–Lys-24. Residues Arg-22 to Tyr-68 enclose the F-box domain.

In Arabidopsis thaliana (Mouse-ear cress), this protein is Putative F-box protein At5g15660.